A 503-amino-acid chain; its full sequence is Cytochrome P450 monooxygenase roqO (503 aa).

A helical membrane pass occupies residues 11-31; the sequence is YSGTACAISLFIFGITLLFPF. N-linked (GlcNAc...) asparagine glycosylation occurs at Asn205. Cys444 serves as a coordination point for heme.

It belongs to the cytochrome P450 family. It depends on heme as a cofactor.

Its subcellular location is the membrane. Its pathway is alkaloid biosynthesis. Cytochrome P450 monooxygenase; part of the gene cluster that mediates the biosynthesis of the mycotoxin meleagrin. The first stage is catalyzed by the dipeptide synthase roqA which condenses histidine and tryptophan to produce histidyltryptophanyldiketopiperazine (HTD). HTD is then converted to roquefortine C through two possible pathways. In the first pathway, prenyltransferase roqD transforms HTD to the intermediate roquefortine D, which is in turn converted to roquefortine C by the cytochrome P450 monooxygenase roqR. In the second pathway, HTD is first converted to the intermediate dehydrohistidyltryptophanyldi-ketopiperazine (DHTD) by roqR which is then prenylated by roqD to form roquefortine C. Roquefortine C can be further transformed to meleagrin via three more reactions including oxydation to glandicolin A by roqM, which is further reduced to glandicoline B by roqO. Finally, glandicoline B is converted to meleagrin by the glandicoline B O-methyltransferase roqN. More studies identified further branching and additional metabolites produced by the roquefortine/meleagrin cluster, including roquefortine F, roquefortine L, roquefortine M, roquefortine N and neoxaline. This Penicillium rubens (strain ATCC 28089 / DSM 1075 / NRRL 1951 / Wisconsin 54-1255) (Penicillium chrysogenum) protein is Cytochrome P450 monooxygenase roqO.